Consider the following 95-residue polypeptide: Exodeoxyribonuclease 7 small subunit (95 aa).

The protein belongs to the XseB family. As to quaternary structure, heterooligomer composed of large and small subunits.

It localises to the cytoplasm. The enzyme catalyses Exonucleolytic cleavage in either 5'- to 3'- or 3'- to 5'-direction to yield nucleoside 5'-phosphates.. In terms of biological role, bidirectionally degrades single-stranded DNA into large acid-insoluble oligonucleotides, which are then degraded further into small acid-soluble oligonucleotides. The chain is Exodeoxyribonuclease 7 small subunit from Corynebacterium aurimucosum (strain ATCC 700975 / DSM 44827 / CIP 107346 / CN-1) (Corynebacterium nigricans).